The following is a 359-amino-acid chain: Serum paraoxonase/arylesterase 1 (359 aa).

A disulfide bridge links C42 with C353. A glycan (N-linked (GlcNAc...) asparagine) is linked at N50. 2 residues coordinate Ca(2+): E53 and D54. H115 serves as the catalytic Proton acceptor. Ca(2+)-binding residues include I117, N168, D169, and N224. The N-linked (GlcNAc...) asparagine glycan is linked to N253. D269 and N270 together coordinate Ca(2+). N-linked (GlcNAc...) asparagine glycans are attached at residues N270 and N324.

The protein belongs to the paraoxonase family. In terms of assembly, homodimer. Interacts with CLU. Ca(2+) is required as a cofactor. Glycosylated. In terms of processing, the signal sequence is not cleaved. Plasma. Associated with HDL.

It localises to the secreted. The protein resides in the extracellular space. It carries out the reaction a phenyl acetate + H2O = a phenol + acetate + H(+). The catalysed reaction is An aryl dialkyl phosphate + H2O = dialkyl phosphate + an aryl alcohol.. The enzyme catalyses an N-acyl-L-homoserine lactone + H2O = an N-acyl-L-homoserine + H(+). Hydrolyzes the toxic metabolites of a variety of organophosphorus insecticides. Capable of hydrolyzing a broad spectrum of organophosphate substrates and lactones, and a number of aromatic carboxylic acid esters. Mediates an enzymatic protection of low density lipoproteins against oxidative modification. This Oryctolagus cuniculus (Rabbit) protein is Serum paraoxonase/arylesterase 1 (PON1).